The following is a 90-amino-acid chain: Putative large ribosomal subunit protein uL23c (90 aa).

Residues 1–46 (MDGIKYAVFTDKSIQLLGKKQYTSNVESRSTRTEIKHWVELWNSYE) form a coded by first part of gene region. The tract at residues 47–90 (MNSHRLPGKGRRMGPIMGHTMHYRRMIITLQSSYSIPPLRKKRT) is coded by second part of gene.

The protein belongs to the universal ribosomal protein uL23 family. As to quaternary structure, part of the 50S ribosomal subunit.

The protein localises to the plastid. It is found in the chloroplast. Binds to 23S rRNA. This is Putative large ribosomal subunit protein uL23c (rpl23) from Spinacia oleracea (Spinach).